Here is a 209-residue protein sequence, read N- to C-terminus: Ribosomal RNA large subunit methyltransferase E (209 aa).

S-adenosyl-L-methionine contacts are provided by Gly63, Trp65, Asp83, Asp99, and Asp124. Catalysis depends on Lys164, which acts as the Proton acceptor.

The protein belongs to the class I-like SAM-binding methyltransferase superfamily. RNA methyltransferase RlmE family.

Its subcellular location is the cytoplasm. The enzyme catalyses uridine(2552) in 23S rRNA + S-adenosyl-L-methionine = 2'-O-methyluridine(2552) in 23S rRNA + S-adenosyl-L-homocysteine + H(+). Specifically methylates the uridine in position 2552 of 23S rRNA at the 2'-O position of the ribose in the fully assembled 50S ribosomal subunit. The protein is Ribosomal RNA large subunit methyltransferase E of Shewanella denitrificans (strain OS217 / ATCC BAA-1090 / DSM 15013).